The primary structure comprises 553 residues: tRNA pseudouridine synthase 1 (553 aa).

Residues 1 to 78 (MSEEQNLRPV…ETRSKDKDES (78 aa)) form a disordered region. Composition is skewed to basic and acidic residues over residues 33–51 (RKAD…KPND) and 64–78 (SNEK…KDES). Catalysis depends on Asp-158, which acts as the Nucleophile. Residues 517–539 (DLEQKAPSDPTPSDEKGKKPQRP) form a disordered region.

This sequence belongs to the tRNA pseudouridine synthase TruA family. The cofactor is Zn(2+).

It is found in the nucleus. It carries out the reaction a uridine in tRNA = a pseudouridine in tRNA. It catalyses the reaction uridine in snRNA = pseudouridine in snRNA. The enzyme catalyses a uridine in mRNA = a pseudouridine in mRNA. Formation of pseudouridine at positions 27 and 28 in the anticodon stem and loop of transfer RNAs; at positions 34 and 36 of intron-containing precursor tRNA(Ile) and at position 35 in the intron-containing tRNA(Tyr). Catalyzes pseudouridylation at position 44 in U2 snRNA. Also catalyzes pseudouridylation of mRNAs. In Kluyveromyces lactis (strain ATCC 8585 / CBS 2359 / DSM 70799 / NBRC 1267 / NRRL Y-1140 / WM37) (Yeast), this protein is tRNA pseudouridine synthase 1 (PUS1).